Here is a 119-residue protein sequence, read N- to C-terminus: Histone H1B, sperm (119 aa).

The 70-residue stretch at 8-77 (THPPVATAVV…QNKGSFRVNK (70 aa)) folds into the H15 domain. The interval 76–119 (NKTALPKKKKAAKKPKAKKVKKPKSAAKKKTNRARAPKTKKNRN) is disordered. Residues 80–119 (LPKKKKAAKKPKAKKVKKPKSAAKKKTNRARAPKTKKNRN) are compositionally biased toward basic residues.

It belongs to the histone H1/H5 family.

It localises to the nucleus. The protein localises to the chromosome. In terms of biological role, histones H1 are necessary for the condensation of nucleosome chains into higher-order structures. This is Histone H1B, sperm from Platynereis dumerilii (Dumeril's clam worm).